We begin with the raw amino-acid sequence, 338 residues long: Patr class I histocompatibility antigen, alpha chain G (338 aa).

The N-terminal stretch at 1–24 is a signal peptide; that stretch reads MVVMAPRTLFLLLSGALTLTETWA. An alpha-1 region spans residues 25–114; that stretch reads GSHSMRYFSA…LRGYYNQSEA (90 aa). Topologically, residues 25 to 308 are extracellular; that stretch reads GSHSMRYFSA…KQSSLPTIPI (284 aa). N-linked (GlcNAc...) asparagine glycosylation is present at Asn110. Positions 115–206 are alpha-2; sequence SSHTLQWMIG…ENGKEMLQRA (92 aa). Intrachain disulfides connect Cys125-Cys188 and Cys227-Cys283. The alpha-3 stretch occupies residues 207–298; that stretch reads DPPKTHVTHH…GLPEPLMLRW (92 aa). The Ig-like C1-type domain occupies 209-299; that stretch reads PKTHVTHHPV…LPEPLMLRWK (91 aa). The tract at residues 299-308 is connecting peptide; sequence KQSSLPTIPI. A helical transmembrane segment spans residues 309 to 332; the sequence is MGIVAGLVVLAAVVTGAAVAAVLW. At 333 to 338 the chain is on the cytoplasmic side; it reads RKKSSD.

Belongs to the MHC class I family. Heterodimer of an alpha chain and a beta chain (beta-2-microglobulin). Homodimer; disulfide-linked. Binds to LILRB1 and LILRB2.

The protein resides in the cell membrane. Involved in the presentation of foreign antigens to the immune system. The chain is Patr class I histocompatibility antigen, alpha chain G (Patr-G) from Pan troglodytes (Chimpanzee).